The following is a 168-amino-acid chain: Ribonuclease H (168 aa).

The 142-residue stretch at 10 to 151 (NNIPVKIYTD…ADKLATNGKI (142 aa)) folds into the RNase H type-1 domain. Residues Asp-19, Glu-57, Asp-79, and Asp-143 each coordinate Mg(2+).

This sequence belongs to the RNase H family. Monomer. It depends on Mg(2+) as a cofactor.

It is found in the cytoplasm. It carries out the reaction Endonucleolytic cleavage to 5'-phosphomonoester.. In terms of biological role, endonuclease that specifically degrades the RNA of RNA-DNA hybrids. This chain is Ribonuclease H, found in Orientia tsutsugamushi (strain Boryong) (Rickettsia tsutsugamushi).